We begin with the raw amino-acid sequence, 1116 residues long: Protein translocase subunit SecA (1116 aa).

ATP-binding positions include glutamine 176, 194-198 (GEGKT), and aspartate 693.

It belongs to the SecA family. In terms of assembly, monomer and homodimer. Part of the essential Sec protein translocation apparatus which comprises SecA, SecYEG and auxiliary proteins SecDF. Other proteins may also be involved.

The protein localises to the cell inner membrane. Its subcellular location is the cytoplasm. The enzyme catalyses ATP + H2O + cellular proteinSide 1 = ADP + phosphate + cellular proteinSide 2.. Functionally, part of the Sec protein translocase complex. Interacts with the SecYEG preprotein conducting channel. Has a central role in coupling the hydrolysis of ATP to the transfer of proteins into and across the cell membrane, serving as an ATP-driven molecular motor driving the stepwise translocation of polypeptide chains across the membrane. In Amoebophilus asiaticus (strain 5a2), this protein is Protein translocase subunit SecA.